The primary structure comprises 763 residues: MNQKTILVLLILAVITIFALVCVLLVGRGGDGGEPSQLPHCPSVSPSAQPWTHPGQSQLFADLSREELTAVMRFLTQRLGPGLVDAAQARPSDNCVFSVELQLPPKAAALAHLDRGSPPPAREALAIVFFGRQPQPNVSELVVGPLPHPSYMRDVTVERHGGPLPYHRRPVLFQEYLDIDQMIFNRELPQASGLLHHCCFYKHRGRNLVTMTTAPRGLQSGDRATWFGLYYNISGAGFFLHHVGLELLVNHKALDPARWTIQKVFYQGRYYDSLAQLEAQFEAGLVNVVLIPDNGTGGSWSLKSPVPPGPAPPLQFYPQGPRFSVQGSRVASSLWTFSFGLGAFSGPRIFDVRFQGERLVYEISLQEALAIYGGNSPAAMTTRYVDGGFGMGKYTTPLTRGVDCPYLATYVDWHFLLESQAPKTIRDAFCVFEQNQGLPLRRHHSDLYSHYFGGLAETVLVVRSMSTLLNYDYVWDTVFHPSGAIEIRFYATGYISSAFLFGATGKYGNQVSEHTLGTVHTHSAHFKVDLDVAGLENWVWAEDMVFVPMAVPWSPEHQLQRLQVTRKLLEMEEQAAFLVGSATPRYLYLASNHSNKWGHPRGYRIQMLSFAGEPLPQNSSMARGFSWERYQLAVTQRKEEEPSSSSVFNQNDPWAPTVDFSDFINNETIAGKDLVAWVTAGFLHIPHAEDIPNTVTVGNGVGFFLRPYNFFDEDPSFYSADSIYFRGDQDAGACEVNPLACLPQAAACAPDLPAFSHGGFSHN.

Topologically, residues 1–5 (MNQKT) are cytoplasmic. Residues 6–26 (ILVLLILAVITIFALVCVLLV) traverse the membrane as a helical; Signal-anchor for type II membrane protein segment. The Extracellular portion of the chain corresponds to 27-763 (GRGGDGGEPS…AFSHGGFSHN (737 aa)). A glycan (O-linked (GalNAc...) serine) is linked at Ser43. N-linked (GlcNAc...) asparagine glycosylation is present at Asn137. A disulfide bond links Cys198 and Cys199. O-linked (GalNAc...) threonine glycosylation is present at Thr212. 2 N-linked (GlcNAc...) asparagine glycosylation sites follow: Asn232 and Asn294. Catalysis depends on Asp386, which acts as the Proton acceptor. An intrachain disulfide couples Cys404 to Cys430. The active-site Schiff-base intermediate with substrate; via topaquinone is the Tyr471. Tyr471 carries the 2',4',5'-topaquinone modification. Cu(2+)-binding residues include His520 and His522. Ca(2+) is bound by residues Asp529, Leu530, Asp531, and Glu572. Asn592 carries an N-linked (GlcNAc...) (complex) asparagine glycan. N-linked (GlcNAc...) asparagine glycosylation occurs at Asn618. Positions 641, 663, and 665 each coordinate Ca(2+). Asn666 carries N-linked (GlcNAc...) asparagine glycosylation. Residues Glu667, Asp673, and Leu674 each coordinate Ca(2+). Thr679 is a glycosylation site (O-linked (GlcNAc) threonine). A Cu(2+)-binding site is contributed by His684. Cysteines 734 and 741 form a disulfide.

It belongs to the copper/topaquinone oxidase family. Homodimer; disulfide-linked. Can heterodimerize with isoform 2 leading to reduced surface expression. Probably forms heterodimers with AOC2. Requires Cu(2+) as cofactor. Ca(2+) is required as a cofactor. It depends on L-topaquinone as a cofactor. Post-translationally, topaquinone (TPQ) is generated by copper-dependent autoxidation of a specific tyrosyl residue. N- and O-glycosylated. Strongly expressed on the high endothelial venules of peripheral lymph nodes and on hepatic endothelia. Also highly expressed in appendix, lung and small intestine. Expressed also in adipose tissue, in bone marrow, colon, heart, kidney, ovary, pancreas, placenta, prostate, skeletal muscle, spleen and testis. Isoform 2 seems to be the predominant transcript in fetal kidneys, fetal cartilage and fetal tonsils. The highest relative expression of isoform 2 occurs in skeletal muscle, heart, pancreas, kidney, and lung.

Its subcellular location is the cell membrane. The enzyme catalyses methylamine + O2 + H2O = formaldehyde + H2O2 + NH4(+). It carries out the reaction benzylamine + O2 + H2O = benzaldehyde + H2O2 + NH4(+). The catalysed reaction is 2-phenylethylamine + O2 + H2O = 2-phenylacetaldehyde + H2O2 + NH4(+). Catalyzes the oxidative deamination of primary amines to the corresponding aldehydes with the concomitant production of hydrogen peroxide and ammonia. Has a preference for the primary monoamines methylamine and benzylamine. Could also act on 2-phenylethylamine but much less efficiently. At endothelial cells surface can also function as a cell adhesion protein that participates in lymphocyte extravasation and recirculation by mediating the binding of lymphocytes to peripheral lymph node vascular endothelial cells in an L-selectin-independent fashion. Functionally, has no semicarbazide-sensitive amine oxidase (SSAO) activity. This chain is Amine oxidase [copper-containing] 3, found in Homo sapiens (Human).